The primary structure comprises 501 residues: Splicing factor 3A subunit 3 (501 aa).

An N-acetylmethionine modification is found at Met1. Residues Ser54 and Ser121 each carry the phosphoserine modification. The Nuclear localization signal motif lies at 175–179 (KERKN). Phosphoserine occurs at positions 295 and 299. The span at 343–354 (ENVQRKQARTGE) shows a compositional bias: basic and acidic residues. A disordered region spans residues 343–374 (ENVQRKQARTGEEREEEEEEQISESESEDEEN). The segment covering 355 to 374 (EREEEEEEQISESESEDEEN) has biased composition (acidic residues). Ser365, Ser367, and Ser369 each carry phosphoserine. The Matrin-type zinc finger occupies 406–437 (YNCEICGNYTYRGPKAFQRHFAEWRHAHGMRC). A Phosphothreonine modification is found at Thr475.

Belongs to the SF3A3 family. As to quaternary structure, component of the 17S U2 SnRNP complex, a ribonucleoprotein complex that contains small nuclear RNA (snRNA) U2 and a number of specific proteins. Part of the SF3A subcomplex of the 17S U2 SnRNP complex which is composed of three subunits; SF3A3/SAP61, SF3A2/SAP62 and SF3A1/SAP114. SF3A associates with the splicing factor SF3B and a 12S RNA unit to form the mature 17S U2 small nuclear ribonucleoprotein complex (17S U2 snRNP). Identified in the spliceosome 'E' complex, a precursor of the spliceosome 'A' complex. Identified in the spliceosome 'A' and 'B' complexes. Identified in the spliceosome 'C' complex. In terms of tissue distribution, ubiquitous.

It localises to the nucleus speckle. The protein resides in the nucleus. In terms of biological role, component of the 17S U2 SnRNP complex of the spliceosome, a large ribonucleoprotein complex that removes introns from transcribed pre-mRNAs. The 17S U2 SnRNP complex (1) directly participates in early spliceosome assembly and (2) mediates recognition of the intron branch site during pre-mRNA splicing by promoting the selection of the pre-mRNA branch-site adenosine, the nucleophile for the first step of splicing. Within the 17S U2 SnRNP complex, SF3A3 is part of the SF3A subcomplex that contributes to the assembly of the 17S U2 snRNP, and the subsequent assembly of the pre-spliceosome 'E' complex and the pre-catalytic spliceosome 'A' complex. Involved in pre-mRNA splicing as a component of pre-catalytic spliceosome 'B' complexes. The sequence is that of Splicing factor 3A subunit 3 (SF3A3) from Homo sapiens (Human).